A 454-amino-acid polypeptide reads, in one-letter code: Noelin-2 (454 aa).

The signal sequence occupies residues 1–20 (MWPLTVPPPLLLLLCSGLAG). Coiled coils occupy residues 58-85 (RDGR…LELR) and 136-193 (LEQY…AQKL). Residues Asn-74, Asn-155, Asn-275, Asn-310, Asn-399, and Asn-441 are each glycosylated (N-linked (GlcNAc...) asparagine). The 253-residue stretch at 194 to 446 (GCGKLTGVSN…QVLYNVTLFH (253 aa)) folds into the Olfactomedin-like domain. A disulfide bridge connects residues Cys-195 and Cys-377.

As to quaternary structure, peripherally associated with AMPAR complex. AMPAR complex consists of an inner core made of 4 pore-forming GluA/GRIA proteins (GRIA1, GRIA2, GRIA3 and GRIA4) and 4 major auxiliary subunits arranged in a twofold symmetry. One of the two pairs of distinct binding sites is occupied either by CNIH2, CNIH3 or CACNG2, CACNG3. The other harbors CACNG2, CACNG3, CACNG4, CACNG8 or GSG1L. This inner core of AMPAR complex is complemented by outer core constituents binding directly to the GluA/GRIA proteins at sites distinct from the interaction sites of the inner core constituents. Outer core constituents include at least PRRT1, PRRT2, CKAMP44/SHISA9, FRRS1L and NRN1. The proteins of the inner and outer core serve as a platform for other, more peripherally associated AMPAR constituents, including OLFM2. Alone or in combination, these auxiliary subunits control the gating and pharmacology of the AMPAR complex and profoundly impact their biogenesis and protein processing. Interacts with GRIA2. Interacts with OLFM1 and OLFM3. Interacts with SRF; the interaction promotes dissociation of SRF from the transcriptional repressor HEY2. Interacts with RUNX2. Post-translationally, N-glycosylated. As to expression, expressed in aortic smooth muscle (at protein level). In the fetus, expressed in the brain and ocular tissues including lens vesicle and optic cup.

Its subcellular location is the secreted. It is found in the synapse. The protein localises to the membrane. The protein resides in the nucleus. It localises to the cytoplasm. Involved in transforming growth factor beta (TGF-beta)-induced smooth muscle differentiation. TGF-beta induces expression and translocation of OLFM2 to the nucleus where it binds to SRF, causing its dissociation from the transcriptional repressor HEY2/HERP1 and facilitating binding of SRF to target genes. Plays a role in AMPAR complex organization. Is a regulator of vascular smooth-muscle cell (SMC) phenotypic switching, that acts by promoting RUNX2 and inhibiting MYOCD binding to SRF. SMC phenotypic switching is the process through which vascular SMCs undergo transition between a quiescent contractile phenotype and a proliferative synthetic phenotype in response to pathological stimuli. SMC phenotypic plasticity is essential for vascular development and remodeling. The chain is Noelin-2 (OLFM2) from Homo sapiens (Human).